Here is a 276-residue protein sequence, read N- to C-terminus: Outer plastidial membrane protein porin (276 aa).

This sequence belongs to the eukaryotic mitochondrial porin (TC 1.B.8.1) family.

Its subcellular location is the plastid outer membrane. Functionally, forms a channel through the cell membrane that allows diffusion of small hydrophilic molecules. The channel adopts an open conformation at low or zero membrane potential and a closed conformation at potentials above 30-40 mV. The open state has a weak anion selectivity whereas the closed state is cation-selective. This chain is Outer plastidial membrane protein porin (POR1), found in Pisum sativum (Garden pea).